The following is a 952-amino-acid chain: Leucine--tRNA ligase (952 aa).

Residues Pro-65 to His-76 carry the 'HIGH' region motif. A 'KMSKS' region motif is present at residues Lys-727–Ser-731. Residue Lys-730 participates in ATP binding.

This sequence belongs to the class-I aminoacyl-tRNA synthetase family.

It is found in the cytoplasm. The enzyme catalyses tRNA(Leu) + L-leucine + ATP = L-leucyl-tRNA(Leu) + AMP + diphosphate. This is Leucine--tRNA ligase from Salinispora arenicola (strain CNS-205).